Reading from the N-terminus, the 446-residue chain is ATP-dependent protease ATPase subunit HslU (446 aa).

ATP contacts are provided by residues Val-17, 59–64 (GVGKTE), Asp-255, Glu-320, and Arg-392.

Belongs to the ClpX chaperone family. HslU subfamily. As to quaternary structure, a double ring-shaped homohexamer of HslV is capped on each side by a ring-shaped HslU homohexamer. The assembly of the HslU/HslV complex is dependent on binding of ATP.

It is found in the cytoplasm. Its function is as follows. ATPase subunit of a proteasome-like degradation complex; this subunit has chaperone activity. The binding of ATP and its subsequent hydrolysis by HslU are essential for unfolding of protein substrates subsequently hydrolyzed by HslV. HslU recognizes the N-terminal part of its protein substrates and unfolds these before they are guided to HslV for hydrolysis. This chain is ATP-dependent protease ATPase subunit HslU, found in Azotobacter vinelandii (strain DJ / ATCC BAA-1303).